Here is a 130-residue protein sequence, read N- to C-terminus: Organic solute transporter subunit beta (130 aa).

Topologically, residues 1-35 (MNYSEKLTGAPPMTEVPLELLEEMLWFFRVEDATP) are extracellular. Residues 36–56 (WNCSMFVLAALVAIISFILLG) form a helical membrane-spanning segment. Topologically, residues 57 to 130 (RNIQANRNQK…HLPDPQEPES (74 aa)) are cytoplasmic. Residues 99 to 130 (LSEKPTLAQGEMEAKCSDVPRVHLPDPQEPES) form a disordered region. Over residues 110 to 124 (MEAKCSDVPRVHLPD) the composition is skewed to basic and acidic residues.

It belongs to the OST-beta family. Interacts with SLC51A. The Ost-alpha/Ost-beta complex is a heterodimer composed of alpha (SLC51A) and beta (SLC51B) subunit; induces the transport of SLC51A from the endoplasmic reticulum to the plasma membrane.

It is found in the cell membrane. The catalysed reaction is taurocholate(out) = taurocholate(in). It catalyses the reaction estrone 3-sulfate(out) = estrone 3-sulfate(in). The enzyme catalyses dehydroepiandrosterone 3-sulfate(out) = dehydroepiandrosterone 3-sulfate(in). It carries out the reaction tauroursodeoxycholate(out) = tauroursodeoxycholate(in). The catalysed reaction is glycoursodeoxycholate(out) = glycoursodeoxycholate(in). It catalyses the reaction glycocholate(out) = glycocholate(in). The enzyme catalyses taurochenodeoxycholate(out) = taurochenodeoxycholate(in). It carries out the reaction glycochenodeoxycholate(out) = glycochenodeoxycholate(in). The catalysed reaction is taurodeoxycholate(out) = taurodeoxycholate(in). It catalyses the reaction glycodeoxycholate(out) = glycodeoxycholate(in). The enzyme catalyses prostaglandin E2(out) = prostaglandin E2(in). Essential component of the Ost-alpha/Ost-beta complex, a heterodimer that acts as the intestinal basolateral transporter responsible for bile acid export from enterocytes into portal blood. The Ost-alpha/Ost-beta complex efficiently transports the major species of bile acids (taurocholate). Taurine conjugates are transported more efficiently across the basolateral membrane than glycine-conjugated bile acids. Can also transport steroids such as estrone 3-sulfate and dehydroepiandrosterone 3-sulfate, therefore playing a role in the enterohepatic circulation of sterols. Able to transport eicosanoids such as prostaglandin E2. Modulates SLC51A glycosylation, membrane trafficking and stability activities. The polypeptide is Organic solute transporter subunit beta (SLC51B) (Bos taurus (Bovine)).